A 471-amino-acid polypeptide reads, in one-letter code: Cysteine--tRNA ligase (471 aa).

Residue Cys-29 coordinates Zn(2+). A 'HIGH' region motif is present at residues Pro-31–Asn-41. Zn(2+)-binding residues include Cys-209, His-234, and Glu-238. The short motif at Lys-266–Ser-270 is the 'KMSKS' region element. Lys-269 provides a ligand contact to ATP.

This sequence belongs to the class-I aminoacyl-tRNA synthetase family. Monomer. Zn(2+) serves as cofactor.

Its subcellular location is the cytoplasm. The enzyme catalyses tRNA(Cys) + L-cysteine + ATP = L-cysteinyl-tRNA(Cys) + AMP + diphosphate. This is Cysteine--tRNA ligase from Listeria innocua serovar 6a (strain ATCC BAA-680 / CLIP 11262).